Reading from the N-terminus, the 406-residue chain is MSSEAKTLQAIKFDRETKTLDILDQLLIPYATEYISIKSIEDAYQAIKLMQVRGAPAIAIVGAFSIVVDVYNNLKETKEKSRTIGDLVESIHYLITARPTAVNLSNACLDIEKLILTEFKKDELVNQHTFDIVYQYSVALYDDDLDNNFKIGDNGLHYIVETLKSQSFTGPFSIITICNTGSLATSGHGTALGIIRTVFKKLSKDAGEKFWLEHVYPCETRPYNQGARLTTYELNYEGIPSTLVCDSMASSLIATLSKQRKVKSSTAPVKFIIAGADRIVENGDTANKIGTFQLSTIADYFNSRAEKENTIKFIIAAPRTTIDFKTKTGDGIIIEERPSQELTTLNGPVLTNNGVLEKQTVGIATPGIDVWNPAFDVTPHELIDCIVTEDTNAFVKNSEGDFNLKV.

Residue D277 is the Proton donor of the active site.

The protein belongs to the eIF-2B alpha/beta/delta subunits family. MtnA subfamily.

Its subcellular location is the cytoplasm. The protein localises to the nucleus. The catalysed reaction is 5-(methylsulfanyl)-alpha-D-ribose 1-phosphate = 5-(methylsulfanyl)-D-ribulose 1-phosphate. It participates in amino-acid biosynthesis; L-methionine biosynthesis via salvage pathway; L-methionine from S-methyl-5-thio-alpha-D-ribose 1-phosphate: step 1/6. Catalyzes the interconversion of methylthioribose-1-phosphate (MTR-1-P) into methylthioribulose-1-phosphate (MTRu-1-P). The protein is Methylthioribose-1-phosphate isomerase of Debaryomyces hansenii (strain ATCC 36239 / CBS 767 / BCRC 21394 / JCM 1990 / NBRC 0083 / IGC 2968) (Yeast).